The primary structure comprises 425 residues: Serine--tRNA ligase (425 aa).

228–230 is a binding site for L-serine; sequence TAE. Residue 259 to 261 coordinates ATP; the sequence is RSE. Glu-282 lines the L-serine pocket. Residue 346-349 participates in ATP binding; sequence EIAS. Ser-382 contacts L-serine.

It belongs to the class-II aminoacyl-tRNA synthetase family. Type-1 seryl-tRNA synthetase subfamily. As to quaternary structure, homodimer. The tRNA molecule binds across the dimer.

Its subcellular location is the cytoplasm. The enzyme catalyses tRNA(Ser) + L-serine + ATP = L-seryl-tRNA(Ser) + AMP + diphosphate + H(+). It catalyses the reaction tRNA(Sec) + L-serine + ATP = L-seryl-tRNA(Sec) + AMP + diphosphate + H(+). It functions in the pathway aminoacyl-tRNA biosynthesis; selenocysteinyl-tRNA(Sec) biosynthesis; L-seryl-tRNA(Sec) from L-serine and tRNA(Sec): step 1/1. Functionally, catalyzes the attachment of serine to tRNA(Ser). Is also able to aminoacylate tRNA(Sec) with serine, to form the misacylated tRNA L-seryl-tRNA(Sec), which will be further converted into selenocysteinyl-tRNA(Sec). This is Serine--tRNA ligase from Rickettsia akari (strain Hartford).